A 148-amino-acid polypeptide reads, in one-letter code: D-aminoacyl-tRNA deacylase (148 aa).

Residues 136 to 137 (GP) carry the Gly-cisPro motif, important for rejection of L-amino acids motif.

It belongs to the DTD family. As to quaternary structure, homodimer.

The protein localises to the cytoplasm. It carries out the reaction glycyl-tRNA(Ala) + H2O = tRNA(Ala) + glycine + H(+). It catalyses the reaction a D-aminoacyl-tRNA + H2O = a tRNA + a D-alpha-amino acid + H(+). Its function is as follows. An aminoacyl-tRNA editing enzyme that deacylates mischarged D-aminoacyl-tRNAs. Also deacylates mischarged glycyl-tRNA(Ala), protecting cells against glycine mischarging by AlaRS. Acts via tRNA-based rather than protein-based catalysis; rejects L-amino acids rather than detecting D-amino acids in the active site. By recycling D-aminoacyl-tRNA to D-amino acids and free tRNA molecules, this enzyme counteracts the toxicity associated with the formation of D-aminoacyl-tRNA entities in vivo and helps enforce protein L-homochirality. This chain is D-aminoacyl-tRNA deacylase, found in Streptococcus mutans serotype c (strain ATCC 700610 / UA159).